Consider the following 1379-residue polypeptide: DNA-directed RNA polymerase subunit beta (1379 aa).

Belongs to the RNA polymerase beta chain family. In terms of assembly, the RNAP catalytic core consists of 2 alpha, 1 beta, 1 beta' and 1 omega subunit. When a sigma factor is associated with the core the holoenzyme is formed, which can initiate transcription.

It catalyses the reaction RNA(n) + a ribonucleoside 5'-triphosphate = RNA(n+1) + diphosphate. Functionally, DNA-dependent RNA polymerase catalyzes the transcription of DNA into RNA using the four ribonucleoside triphosphates as substrates. The polypeptide is DNA-directed RNA polymerase subunit beta (Chelativorans sp. (strain BNC1)).